A 249-amino-acid chain; its full sequence is Coproheme decarboxylase (249 aa).

Residues Arg-131, Tyr-145 to Lys-149, His-172, and Gln-185 contribute to the Fe-coproporphyrin III site. Residue Tyr-145 is part of the active site.

It belongs to the ChdC family. Type 1 subfamily. The cofactor is Fe-coproporphyrin III.

It carries out the reaction Fe-coproporphyrin III + 2 H2O2 + 2 H(+) = heme b + 2 CO2 + 4 H2O. The enzyme catalyses Fe-coproporphyrin III + H2O2 + H(+) = harderoheme III + CO2 + 2 H2O. The catalysed reaction is harderoheme III + H2O2 + H(+) = heme b + CO2 + 2 H2O. It functions in the pathway porphyrin-containing compound metabolism; protoheme biosynthesis. In terms of biological role, involved in coproporphyrin-dependent heme b biosynthesis. Catalyzes the decarboxylation of Fe-coproporphyrin III (coproheme) to heme b (protoheme IX), the last step of the pathway. The reaction occurs in a stepwise manner with a three-propionate intermediate. The protein is Coproheme decarboxylase of Staphylococcus carnosus (strain TM300).